The sequence spans 224 residues: Small ribosomal subunit protein uS3 (224 aa).

One can recognise a KH type-2 domain in the interval 38 to 106 (LREYVKEKLG…EVYLNVVEVR (69 aa)).

The protein belongs to the universal ribosomal protein uS3 family. In terms of assembly, part of the 30S ribosomal subunit. Forms a tight complex with proteins S10 and S14.

Binds the lower part of the 30S subunit head. Binds mRNA in the 70S ribosome, positioning it for translation. In Anaeromyxobacter sp. (strain Fw109-5), this protein is Small ribosomal subunit protein uS3.